A 1051-amino-acid chain; its full sequence is Leucine zipper protein 1 (1051 aa).

The residue at position 2 (alanine 2) is an N-acetylalanine. A coiled-coil region spans residues 11 to 354; that stretch reads ASNRHLRFKL…KLQVKKQKEL (344 aa). Disordered stretches follow at residues 247–293, 374–401, 432–554, and 569–601; these read ISST…KDLN, RTKL…HKRE, AAKA…SQVT, and ASSQ…SKAP. The span at 254 to 293 shows a compositional bias: basic and acidic residues; sequence KESRRKGSLDYLKQVENETRDKSENEKNRNQEDNKVKDLN. Phosphoserine is present on residues serine 256, serine 261, serine 395, serine 513, serine 571, serine 575, serine 612, and serine 660. Residues 569–578 show a composition bias toward polar residues; the sequence is ASSQRASSEG. The segment at 675-727 is disordered; that stretch reads VNTTITPEPEPKLQPNSREKVKSRGGTRTPLFENDKNAAVENDSAKSMRSSSN. Threonine 680 is subject to Phosphothreonine. Serine 691 carries the phosphoserine modification. A compositionally biased stretch (basic and acidic residues) spans 707–720; it reads ENDKNAAVENDSAK. Serine 746 is modified (phosphoserine). The segment covering 789 to 799 has biased composition (low complexity); sequence VTSKVTSSITI. The tract at residues 789-837 is disordered; the sequence is VTSKVTSSITIYPSDSSGPRAVPTEAPRERHTSTSNIQVGPPELTSVSN. The tract at residues 834-884 is required for interaction with FLNA; the sequence is SVSNHISSPLELSIHKHDITLQLTEAERVGDGSPKNRAETVVSRSSILIKP. Phosphoserine is present on serine 906. Over residues 929–938 the composition is skewed to basic and acidic residues; sequence RDLKCSEDPP. Residues 929-1000 form a disordered region; it reads RDLKCSEDPP…TQSSLTASEV (72 aa). 2 stretches are compositionally biased toward polar residues: residues 946–958 and 989–999; these read EATN…SSTD and RRTQSSLTASE. The residue at position 957 (threonine 957) is a Phosphothreonine. Serine 993 carries the phosphoserine modification.

As to quaternary structure, component of the CERF-1 ISWI chromatin remodeling complex (also called the CECR2-containing remodeling factor (CERF) complex) at least composed of CECR2 and SMARCA1. Component of the CERF-5 ISWI chromatin remodeling complex at least composed of CECR2 and SMARCA5/SNF2H. LUZP1 is detected as part of the CERF-1 and CERF-5 complexes in embryonic stem (ES) cells where it is involved in complex stabilization but is not detected in the complexes in the testis. Interacts (via C-terminus) with LIMA1/EPLIN; both proteins restrict ciliation and may work together to regulate this process. Interacts with myosin light chain MYL9; the interaction results in inhibition of phosphorylation of MYL9 by DAPK3. Interacts with DAPK3; the interaction is likely to occur throughout the cell cycle and reduces the LUZP1-mediated suppression of MYL9 phosphorylation. Interacts with the chromosomal passenger complex (CPC); CPC kinase activity is required for localization of LUZP1 to the centromere. In terms of tissue distribution, expressed in cerebral cortex, cerebellum, hippocampus and brain stem.

It localises to the cytoplasm. Its subcellular location is the cytoskeleton. It is found in the microtubule organizing center. The protein resides in the centrosome. The protein localises to the cilium basal body. It localises to the midbody. Its subcellular location is the chromosome. It is found in the centromere. The protein resides in the spindle. The protein localises to the stress fiber. It localises to the nucleus. Its subcellular location is the cell projection. It is found in the dendrite. The protein resides in the perikaryon. The protein localises to the cell junction. It localises to the tight junction. Its function is as follows. F-actin cross-linking protein. Stabilizes actin and acts as a negative regulator of primary cilium formation. Positively regulates the phosphorylation of both myosin II and protein phosphatase 1 regulatory subunit PPP1R12A/MYPT1 and promotes the assembly of myosin II stacks within actin stress fibers. Inhibits the phosphorylation of myosin light chain MYL9 by DAPK3 and suppresses the constriction velocity of the contractile ring during cytokinesis. Binds to microtubules and promotes epithelial cell apical constriction by up-regulating levels of diphosphorylated myosin light chain (MLC) through microtubule-dependent inhibition of MLC dephosphorylation by myosin phosphatase. Involved in regulation of cell migration, nuclear size and centriole number, probably through regulation of the actin cytoskeleton. Component of the CERF-1 and CERF-5 chromatin remodeling complexes in embryonic stem cells where it acts to stabilize the complexes. Plays a role in embryonic brain and cardiovascular development. This is Leucine zipper protein 1 (Luzp1) from Rattus norvegicus (Rat).